We begin with the raw amino-acid sequence, 327 residues long: Probable serine/threonine-protein kinase WNK5 (327 aa).

The segment at 1–48 (MPPNPTPPRRATTTTTRATSGVRRGEEEQGGMAVSASAGEEEEAFEEV) is disordered. Low complexity predominate over residues 9–19 (RRATTTTTRAT). Positions 39-48 (GEEEEAFEEV) are enriched in acidic residues. Residues 55–314 (GRYADVLGLG…AAELLRDPFF (260 aa)) form the Protein kinase domain. 136-139 (TEVC) lines the ATP pocket. Aspartate 203 functions as the Proton acceptor in the catalytic mechanism.

This sequence belongs to the protein kinase superfamily. Ser/Thr protein kinase family. WNK subfamily.

The enzyme catalyses L-seryl-[protein] + ATP = O-phospho-L-seryl-[protein] + ADP + H(+). The catalysed reaction is L-threonyl-[protein] + ATP = O-phospho-L-threonyl-[protein] + ADP + H(+). The sequence is that of Probable serine/threonine-protein kinase WNK5 (WNK5) from Oryza sativa subsp. japonica (Rice).